We begin with the raw amino-acid sequence, 156 residues long: Snaclec A11 (156 aa).

Positions 1 to 23 (MGRSISVSFGLLVVFLSLSGTGA) are cleaved as a signal peptide. Cystine bridges form between cysteine 27/cysteine 38, cysteine 55/cysteine 154, and cysteine 129/cysteine 146. The 122-residue stretch at 34-155 (YDQHCYQAVD…CGQPYRFTCE (122 aa)) folds into the C-type lectin domain.

The protein belongs to the snaclec family. Heterodimer; disulfide-linked. In terms of tissue distribution, expressed by the venom gland.

The protein localises to the secreted. Its function is as follows. Interferes with one step of hemostasis (modulation of platelet aggregation, or coagulation cascade, for example). The polypeptide is Snaclec A11 (Macrovipera lebetinus (Levantine viper)).